The following is a 323-amino-acid chain: ADP-L-glycero-D-manno-heptose-6-epimerase (323 aa).

NADP(+) contacts are provided by residues 10 to 11 (FI), 31 to 32 (DN), Lys-38, Arg-53, 75 to 79 (MGACS), and Asn-92. The active-site Proton acceptor is the Tyr-143. Lys-147 contacts NADP(+). Position 170 (Asn-170) interacts with substrate. NADP(+)-binding residues include Val-171 and Lys-179. Lys-179 serves as the catalytic Proton acceptor. Substrate contacts are provided by residues Asp-181, Lys-188, 202 to 205 (FRSC), Arg-216, and Tyr-281.

The protein belongs to the NAD(P)-dependent epimerase/dehydratase family. HldD subfamily. As to quaternary structure, homopentamer. NADP(+) serves as cofactor.

It catalyses the reaction ADP-D-glycero-beta-D-manno-heptose = ADP-L-glycero-beta-D-manno-heptose. Its pathway is nucleotide-sugar biosynthesis; ADP-L-glycero-beta-D-manno-heptose biosynthesis; ADP-L-glycero-beta-D-manno-heptose from D-glycero-beta-D-manno-heptose 7-phosphate: step 4/4. Its function is as follows. Catalyzes the interconversion between ADP-D-glycero-beta-D-manno-heptose and ADP-L-glycero-beta-D-manno-heptose via an epimerization at carbon 6 of the heptose. The polypeptide is ADP-L-glycero-D-manno-heptose-6-epimerase (Nitratidesulfovibrio vulgaris (strain ATCC 29579 / DSM 644 / CCUG 34227 / NCIMB 8303 / VKM B-1760 / Hildenborough) (Desulfovibrio vulgaris)).